The primary structure comprises 472 residues: PEP-dependent dihydroxyacetone kinase, phosphoryl donor subunit DhaM (472 aa).

Residues 1–135 form the PTS EIIA type-4 domain; that stretch reads MVNLVIVSHS…HALEAKREQL (135 aa). The active-site Tele-phosphohistidine intermediate is histidine 9. In terms of domain architecture, HPr spans 155-242; sequence ARSLAVVIKN…QLAEDNFGET (88 aa). Histidine 169 (pros-phosphohistidine intermediate) is an active-site residue. Residues 264–472 form a PTS EI-like, N-terminal part region; it reads QPVLCTVQAK…VKTQRFNRQG (209 aa). The active-site Tele-phosphohistidine intermediate is the histidine 430.

The protein belongs to the PEP-utilizing enzyme family. In terms of assembly, homodimer. The dihydroxyacetone kinase complex is composed of a homodimer of DhaM, a homodimer of DhaK and the subunit DhaL.

It catalyses the reaction dihydroxyacetone + phosphoenolpyruvate = dihydroxyacetone phosphate + pyruvate. It functions in the pathway polyol metabolism; glycerol degradation. Functionally, component of the dihydroxyacetone kinase complex, which is responsible for the phosphoenolpyruvate (PEP)-dependent phosphorylation of dihydroxyacetone. DhaM serves as the phosphoryl donor. Is phosphorylated by phosphoenolpyruvate in an EI- and HPr-dependent reaction, and a phosphorelay system on histidine residues finally leads to phosphoryl transfer to DhaL and dihydroxyacetone. The protein is PEP-dependent dihydroxyacetone kinase, phosphoryl donor subunit DhaM of Escherichia coli (strain K12).